The sequence spans 421 residues: Dihydroorotase (421 aa).

The Zn(2+) site is built by His-60 and His-62. Residues 62–64 (HFR) and Asn-94 each bind substrate. 3 residues coordinate Zn(2+): Asp-151, His-178, and His-231. Residue Asn-277 participates in substrate binding. A Zn(2+)-binding site is contributed by Asp-304. Asp-304 is a catalytic residue. Position 308 (His-308) interacts with substrate.

It belongs to the metallo-dependent hydrolases superfamily. DHOase family. Class I DHOase subfamily. The cofactor is Zn(2+).

It catalyses the reaction (S)-dihydroorotate + H2O = N-carbamoyl-L-aspartate + H(+). Its pathway is pyrimidine metabolism; UMP biosynthesis via de novo pathway; (S)-dihydroorotate from bicarbonate: step 3/3. Catalyzes the reversible cyclization of carbamoyl aspartate to dihydroorotate. The sequence is that of Dihydroorotase from Clostridioides difficile (strain 630) (Peptoclostridium difficile).